The chain runs to 129 residues: Phosphoribosyl-AMP cyclohydrolase (129 aa).

Position 76 (D76) interacts with Mg(2+). C77 is a binding site for Zn(2+). Positions 78 and 80 each coordinate Mg(2+). Positions 97 and 104 each coordinate Zn(2+).

It belongs to the PRA-CH family. In terms of assembly, homodimer. Requires Mg(2+) as cofactor. Zn(2+) serves as cofactor.

The protein resides in the cytoplasm. It catalyses the reaction 1-(5-phospho-beta-D-ribosyl)-5'-AMP + H2O = 1-(5-phospho-beta-D-ribosyl)-5-[(5-phospho-beta-D-ribosylamino)methylideneamino]imidazole-4-carboxamide. The protein operates within amino-acid biosynthesis; L-histidine biosynthesis; L-histidine from 5-phospho-alpha-D-ribose 1-diphosphate: step 3/9. Functionally, catalyzes the hydrolysis of the adenine ring of phosphoribosyl-AMP. This chain is Phosphoribosyl-AMP cyclohydrolase, found in Albidiferax ferrireducens (strain ATCC BAA-621 / DSM 15236 / T118) (Rhodoferax ferrireducens).